A 486-amino-acid polypeptide reads, in one-letter code: Beta-barrel assembly-enhancing protease (486 aa).

A signal peptide spans 1 to 19 (MIATLLSSLLLTGPISAGA). Histidine 134 is a binding site for Zn(2+). Glutamate 135 is a catalytic residue. Residues histidine 138 and glutamate 199 each contribute to the Zn(2+) site. Aspartate 203 serves as the catalytic Proton donor.

The protein belongs to the peptidase M48 family. BepA subfamily. Requires Zn(2+) as cofactor.

The protein localises to the periplasm. Its function is as follows. Functions both as a chaperone and a metalloprotease. Maintains the integrity of the outer membrane by promoting either the assembly or the elimination of outer membrane proteins, depending on their folding state. The chain is Beta-barrel assembly-enhancing protease from Yersinia pestis.